Consider the following 296-residue polypeptide: MKHIINSYEHTNDTARNNSDCPDVVLPEEIFFTISVIGILENLIVLLAVIKNKNLQSPMYFFICSLAISDMLGSLYKILENILIMFRNMGYLKPRGSFESTADDIIDCMFILSLLGSIFSLSVIAADRYITIFHALQYHSIVTMRRTIITLTIIWMFCTGSGITMVIFSHHIPTVLTFTSLFPLMLVFILCLYIHMFLLARSHARKISTLPRTNMKGAMTLTILLGVFIFCWAPFVLHVLLMTFCPNNPYCVCYMSLFQVNGMLIMCNAVIDPFIYAFRSPELRDAFKRMLFCNRY.

Over 1–23 (MKHIINSYEHTNDTARNNSDCPD) the chain is Extracellular. 2 N-linked (GlcNAc...) asparagine glycosylation sites follow: N12 and N17. Disulfide bonds link C21–C253 and C245–C251. A helical membrane pass occupies residues 24 to 49 (VVLPEEIFFTISVIGILENLIVLLAV). Over 50-58 (IKNKNLQSP) the chain is Cytoplasmic. The helical transmembrane segment at 59-79 (MYFFICSLAISDMLGSLYKIL) threads the bilayer. The Extracellular portion of the chain corresponds to 80-104 (ENILIMFRNMGYLKPRGSFESTADD). The chain crosses the membrane as a helical span at residues 105–126 (IIDCMFILSLLGSIFSLSVIAA). The Cytoplasmic segment spans residues 127 to 147 (DRYITIFHALQYHSIVTMRRT). The chain crosses the membrane as a helical span at residues 148 to 168 (IITLTIIWMFCTGSGITMVIF). Residues 169-180 (SHHIPTVLTFTS) are Extracellular-facing. The chain crosses the membrane as a helical span at residues 181–199 (LFPLMLVFILCLYIHMFLL). Over 200–217 (ARSHARKISTLPRTNMKG) the chain is Cytoplasmic. The helical transmembrane segment at 218–244 (AMTLTILLGVFIFCWAPFVLHVLLMTF) threads the bilayer. Residues 245–256 (CPNNPYCVCYMS) are Extracellular-facing. Residues 257–278 (LFQVNGMLIMCNAVIDPFIYAF) traverse the membrane as a helical segment. Topologically, residues 279-296 (RSPELRDAFKRMLFCNRY) are cytoplasmic. C293 is lipidated: S-palmitoyl cysteine.

The protein belongs to the G-protein coupled receptor 1 family. In terms of assembly, homodimer. Interacts with corticotropin (ACTH). Interacts with MRAP; this interaction targets MC2R to the plasma membrane. Interacts with MRAP2; competing with MRAP for binding to MC2R and impairing the binding of corticotropin (ACTH). Ubiquitinated by MGRN1 that may be involved in post-endocytic trafficking and/or degradation of internalized receptor.

It is found in the cell membrane. Its function is as follows. Hormone receptor primarily expressed in adrenal cortex that plays a key role in regulating adrenocortical function. Upon corticotropin (ACTH) binding, facilitates the release of adrenal glucocorticoids, including cortisol and corticosterone. In addition, MC2R is required for fetal and neonatal adrenal gland development. Mechanistically, activates adenylate cyclase (cAMP), the MAPK cascade as well as the cAMP-dependent protein kinase A pathway leading to steroidogenic factor 1/NR5A1-mediated transcriptional activation. The sequence is that of Adrenocorticotropic hormone receptor (Mc2r) from Mus musculus (Mouse).